A 294-amino-acid chain; its full sequence is Survival motor neuron protein (294 aa).

The span at 1-10 (MAMSSGGSGS) shows a compositional bias: gly residues. The disordered stretch occupies residues 1–32 (MAMSSGGSGSGVPEQEDAVLFRRGTGQSDDSD). The residue at position 2 (alanine 2) is an N-acetylalanine. Phosphoserine; by PKA is present on residues serine 4, serine 5, and serine 8. Residues 13 to 44 (PEQEDAVLFRRGTGQSDDSDIWDDTALIKAYD) form a P1 (binding site for GEMIN2) region. The residue at position 25 (threonine 25) is a Phosphothreonine. A phosphoserine mark is found at serine 28 and serine 31. Lysine 51 is covalently cross-linked (Glycyl lysine isopeptide (Lys-Gly) (interchain with G-Cter in SUMO2)). Residues 60 to 88 (CETSGKSKTTPKRKPAKKNKSQKKNTAAS) form a disordered region. The span at 68–82 (TTPKRKPAKKNKSQK) shows a compositional bias: basic residues. Threonine 69 is subject to Phosphothreonine. Phosphothreonine; by PKA is present on threonine 85. The Tudor domain maps to 91–151 (QWKVGDKCSA…LSPICEVANN (61 aa)). The interval 97–209 (KCSAIWSEDG…MPGPRLGPGK (113 aa)) is required for interaction with RPP20/POP7. Positions 156–166 (AQENENESQVS) are enriched in low complexity. A disordered region spans residues 156–222 (AQENENESQV…KFNGPPPPPP (67 aa)). Serine 187 is modified (phosphoserine; by PKA). Residues 194-204 (LPPPPPMPGPR) are compositionally biased toward pro residues. Positions 206-215 (GPGKPGLKFN) are enriched in low complexity. Lysine 209 is covalently cross-linked (Glycyl lysine isopeptide (Lys-Gly) (interchain with G-Cter in SUMO2)). A P2 (binding site for SM B) region spans residues 240–267 (PPIIPPPPPICPDSLDDADALGSMLISW). A required for interaction with SYNCRIP region spans residues 279-294 (GFRQNQKEGRCSHSLN).

Belongs to the SMN family. As to quaternary structure, homooligomer; may form higher order homooligomers in the dimer to octamer range. Part of the core SMN complex that contains SMN1, GEMIN2/SIP1, DDX20/GEMIN3, GEMIN4, GEMIN5, GEMIN6, GEMIN7, GEMIN8 and STRAP/UNRIP. Part of the SMN-Sm complex that contains SMN1, GEMIN2/SIP1, DDX20/GEMIN3, GEMIN4, GEMIN5, GEMIN6, GEMIN7, GEMIN8, STRAP/UNRIP and the Sm proteins SNRPB, SNRPD1, SNRPD2, SNRPD3, SNRPE, SNRPF and SNRPG. Component of an import snRNP complex composed of KPNB1, RNUT1, SMN1 and ZNF259. Interacts with DDX20, FBL, NOLA1, RNUT1, SYNCRIP and with several spliceosomal snRNP core Sm proteins, including SNRPB, SNRPD1, SNRPD2, SNRPD3, SNRPE and ILF3. Interacts with GEMIN2; the interaction is direct. Interacts with GEMIN3; the interaction is direct. Interacts with GEMIN8; the interaction is direct. Interacts with SNRPB; the interaction is direct. Interacts (via Tudor domain) with SNRPD1 (via C-terminus); the interaction is direct. Interacts with SNRPD2; the interaction is direct. Interacts (via Tudor domain) with SNRPD3 (via C-terminus); the interaction is direct. Interacts with SNRPE; the interaction is direct. Interacts with OSTF1, LSM10, LSM11 and RPP20/POP7. Interacts (via C-terminal region) with ZPR1 (via C-terminal region). Interacts (via Tudor domain) with COIL. Interacts with SETX; recruits SETX to POLR2A. Interacts with POLR2A (via the C-terminal domain (CTD)). Interacts with PRMT5. Interacts with XRN2. Interacts (via C-terminus) with FMR1 (via C-terminus); the interaction is direct and occurs in a RNA-independent manner. Interacts (via Tudor domain) with SF3B2 ('Arg-508'-methylated form). Interacts with WRAP53/TCAB1. Interacts (via Tudor domain) with ELAVL4 in an RNA-independent manner; the interaction is required for localization of ELAVL4 to RNA granules. Interacts with FRG1.

It is found in the nucleus. The protein localises to the gem. It localises to the cajal body. The protein resides in the cytoplasm. Its subcellular location is the cytoplasmic granule. It is found in the perikaryon. The protein localises to the cell projection. It localises to the neuron projection. The protein resides in the axon. Its subcellular location is the myofibril. It is found in the sarcomere. The protein localises to the z line. Functionally, the SMN complex catalyzes the assembly of small nuclear ribonucleoproteins (snRNPs), the building blocks of the spliceosome, and thereby plays an important role in the splicing of cellular pre-mRNAs. Most spliceosomal snRNPs contain a common set of Sm proteins SNRPB, SNRPD1, SNRPD2, SNRPD3, SNRPE, SNRPF and SNRPG that assemble in a heptameric protein ring on the Sm site of the small nuclear RNA to form the core snRNP (Sm core). In the cytosol, the Sm proteins SNRPD1, SNRPD2, SNRPE, SNRPF and SNRPG are trapped in an inactive 6S pICln-Sm complex by the chaperone CLNS1A that controls the assembly of the core snRNP. To assemble core snRNPs, the SMN complex accepts the trapped 5Sm proteins from CLNS1A forming an intermediate. Binding of snRNA inside 5Sm ultimately triggers eviction of the SMN complex, thereby allowing binding of SNRPD3 and SNRPB to complete assembly of the core snRNP. Within the SMN complex, SMN1 acts as a structural backbone and together with GEMIN2 it gathers the Sm complex subunits. Ensures the correct splicing of U12 intron-containing genes that may be important for normal motor and proprioceptive neurons development. Also required for resolving RNA-DNA hybrids created by RNA polymerase II, that form R-loop in transcription terminal regions, an important step in proper transcription termination. May also play a role in the metabolism of small nucleolar ribonucleoprotein (snoRNPs). This Pongo abelii (Sumatran orangutan) protein is Survival motor neuron protein (SMN1).